Here is a 146-residue protein sequence, read N- to C-terminus: Hemoglobin subunit beta (146 aa).

In terms of domain architecture, Globin spans 2–146 (HWTAEEKQLI…VAHALARKYH (145 aa)). Residues histidine 63 and histidine 92 each coordinate heme b.

This sequence belongs to the globin family. In terms of assembly, heterotetramer of two alpha chains and two beta chains. As to expression, red blood cells.

Functionally, involved in oxygen transport from the lung to the various peripheral tissues. The sequence is that of Hemoglobin subunit beta (HBB) from Aegypius monachus (Cinereous vulture).